The following is a 492-amino-acid chain: MAVASRLAVARVAPDGGAAGRRRRRGRPVVAVPTAGRGRGGAVAASPPTEEAVQMTEPLTKEDLVAYLVSGCKPKENWRIGTEHEKFGFEVDTLRPIKYDQIRDILNGLAERFDWDKIVEENNVIGLKQGKQSISLEPGGQFELSGAPLETLHQTCAEVNSHLYQVKAVGEEMGIGFLGIGFQPKWALSDIPIMPKGRYEIMRNYMPKVGSLGLDMMFRTCTVQVNLDFSSEQDMIRKFHTGLALQPIATAIFANSPFKEGKPNGYLSLRSHIWTDTDNNRSGMLPFVFDDSFGFERYVDYALDVPMYFVYRNKKYIDCTGMSFRDFMVGKLPQAPGELPTLNDWENHLTTIFPEVRLKRYLEMRGADGGPWRRLCALPAFWVGLLYDEESLQSISDMTSDWTNEEREMLRRKVPVTGLKTPFRDGYVRDLAEEILQLSKNGLERRGYKEVGFLREVDAVISSGVTPAERLLNLYETKWQRSVDPVFQELLY.

Residues Cys156 and Cys376 are joined by a disulfide bond.

It belongs to the carboxylate-amine ligase family. Glutamate--cysteine ligase type 2 subfamily. Homodimer or monomer when oxidized or reduced, respectively. In terms of processing, the Cys-156-Cys-376 disulfide bridge is known to modulate the enzyme activity according to the redox status. The oxidized form constitutes the active enzyme.

The protein localises to the plastid. It is found in the chloroplast. It catalyses the reaction L-cysteine + L-glutamate + ATP = gamma-L-glutamyl-L-cysteine + ADP + phosphate + H(+). It functions in the pathway sulfur metabolism; glutathione biosynthesis; glutathione from L-cysteine and L-glutamate: step 1/2. In Oryza sativa subsp. indica (Rice), this protein is Glutamate--cysteine ligase A, chloroplastic (GSH1-1).